We begin with the raw amino-acid sequence, 158 residues long: Ribonuclease H (158 aa).

Residues 3-144 form the RNase H type-1 domain; that stretch reads ELKLIHIFTD…CDQLARAAAE (142 aa). Residues D12, E50, D72, and D136 each contribute to the Mg(2+) site.

This sequence belongs to the RNase H family. In terms of assembly, monomer. Requires Mg(2+) as cofactor.

Its subcellular location is the cytoplasm. It carries out the reaction Endonucleolytic cleavage to 5'-phosphomonoester.. In terms of biological role, endonuclease that specifically degrades the RNA of RNA-DNA hybrids. This is Ribonuclease H from Shewanella sp. (strain MR-7).